The chain runs to 134 residues: Cytochrome b5 (134 aa).

Ala2 carries the N-acetylalanine modification. N6-acetyllysine occurs at positions 7, 10, and 19. Positions 9–85 (VKYYTLEEIK…SKTFIIGELH (77 aa)) constitute a Cytochrome b5 heme-binding domain. Positions 44 and 68 each coordinate heme. A helical transmembrane segment spans residues 109–131 (WWTNWVIPAISALIVALMYRLYM).

This sequence belongs to the cytochrome b5 family.

It localises to the endoplasmic reticulum membrane. It is found in the microsome membrane. Cytochrome b5 is a membrane-bound hemoprotein functioning as an electron carrier for several membrane-bound oxygenases. The sequence is that of Cytochrome b5 (CYB5A) from Oryctolagus cuniculus (Rabbit).